We begin with the raw amino-acid sequence, 502 residues long: Probable zinc metalloprotease MGG_02107 (502 aa).

The first 21 residues, 1–21 (MRSPPGAVAALASVAAQLATA), serve as a signal peptide directing secretion. The Zn(2+) site is built by His182, Asp202, and Glu235. N-linked (GlcNAc...) asparagine glycosylation is present at Asn250. Asp262 is a binding site for Zn(2+). A disordered region spans residues 284–307 (QGGSPAGESKERAETRASIGGEND). Asn375, Asn417, and Asn427 each carry an N-linked (GlcNAc...) asparagine glycan. One can recognise a Fibronectin type-III domain in the interval 414 to 502 (QVRNVTVDTS…KSPATMPFPG (89 aa)).

The protein belongs to the peptidase M28 family. M28B subfamily. Requires Zn(2+) as cofactor.

It is found in the secreted. The chain is Probable zinc metalloprotease MGG_02107 from Pyricularia oryzae (strain 70-15 / ATCC MYA-4617 / FGSC 8958) (Rice blast fungus).